The primary structure comprises 224 residues: Oxygen-evolving enhancer protein 3-1, chloroplastic (224 aa).

The N-terminal 44 residues, 1-44 (MASMGGLHGASPAVLEGSLKINGSSRLNGSGRVAVAQRSRLVVR), are a transit peptide targeting the chloroplast. The transit peptide at 45-75 (AQQSEETSRRSVIGLVAAGLAGGSFVQAVLA) directs the protein to the thylakoid. The residue at position 189 (Thr-189) is a Phosphothreonine. A Phosphotyrosine modification is found at Tyr-209. Thr-212 is subject to Phosphothreonine.

It belongs to the PsbQ family. As to expression, expressed in green tissue, with high steady-state mRNA levels in leaves. Not expressed in roots.

It is found in the plastid. It localises to the chloroplast thylakoid membrane. In terms of biological role, required for photosystem II assembly/stability and photoautotrophic growth under low light conditions. This chain is Oxygen-evolving enhancer protein 3-1, chloroplastic (PSBQ1), found in Arabidopsis thaliana (Mouse-ear cress).